Consider the following 282-residue polypeptide: Bifunctional protein FolD (282 aa).

NADP(+)-binding positions include 165–167 and Ile231; that span reads GAS.

Belongs to the tetrahydrofolate dehydrogenase/cyclohydrolase family. In terms of assembly, homodimer.

It catalyses the reaction (6R)-5,10-methylene-5,6,7,8-tetrahydrofolate + NADP(+) = (6R)-5,10-methenyltetrahydrofolate + NADPH. The catalysed reaction is (6R)-5,10-methenyltetrahydrofolate + H2O = (6R)-10-formyltetrahydrofolate + H(+). The protein operates within one-carbon metabolism; tetrahydrofolate interconversion. Its function is as follows. Catalyzes the oxidation of 5,10-methylenetetrahydrofolate to 5,10-methenyltetrahydrofolate and then the hydrolysis of 5,10-methenyltetrahydrofolate to 10-formyltetrahydrofolate. The protein is Bifunctional protein FolD of Francisella philomiragia subsp. philomiragia (strain ATCC 25017 / CCUG 19701 / FSC 153 / O#319-036).